A 964-amino-acid chain; its full sequence is Glycine dehydrogenase (decarboxylating) (964 aa).

Residues 1–10 (MNSTLQNRNR) show a composition bias toward polar residues. The disordered stretch occupies residues 1–25 (MNSTLQNRNRTNLERVSTDPLDTFP). At Lys713 the chain carries N6-(pyridoxal phosphate)lysine.

It belongs to the GcvP family. In terms of assembly, the glycine cleavage system is composed of four proteins: P, T, L and H. The cofactor is pyridoxal 5'-phosphate.

The catalysed reaction is N(6)-[(R)-lipoyl]-L-lysyl-[glycine-cleavage complex H protein] + glycine + H(+) = N(6)-[(R)-S(8)-aminomethyldihydrolipoyl]-L-lysyl-[glycine-cleavage complex H protein] + CO2. Its function is as follows. The glycine cleavage system catalyzes the degradation of glycine. The P protein binds the alpha-amino group of glycine through its pyridoxal phosphate cofactor; CO(2) is released and the remaining methylamine moiety is then transferred to the lipoamide cofactor of the H protein. This is Glycine dehydrogenase (decarboxylating) from Leptospira borgpetersenii serovar Hardjo-bovis (strain JB197).